A 201-amino-acid chain; its full sequence is 3-isopropylmalate dehydratase small subunit (201 aa).

Belongs to the LeuD family. LeuD type 1 subfamily. As to quaternary structure, heterodimer of LeuC and LeuD.

It catalyses the reaction (2R,3S)-3-isopropylmalate = (2S)-2-isopropylmalate. Its pathway is amino-acid biosynthesis; L-leucine biosynthesis; L-leucine from 3-methyl-2-oxobutanoate: step 2/4. Functionally, catalyzes the isomerization between 2-isopropylmalate and 3-isopropylmalate, via the formation of 2-isopropylmaleate. The protein is 3-isopropylmalate dehydratase small subunit of Sinorhizobium fredii (strain NBRC 101917 / NGR234).